A 498-amino-acid chain; its full sequence is Hyaluronan-mediated motility receptor (498 aa).

Residues 150-331 (EEMTSERNVF…ITDLQNQLRQ (182 aa)) are required for interaction with FAM83D. N-linked (GlcNAc...) asparagine glycans are attached at residues asparagine 262 and asparagine 302. Hyaluronic acid-binding stretches follow at residues 420–430 (KQKIKHVVKLK) and 442–451 (KLRSQLAKRK). Asparagine 483 carries N-linked (GlcNAc...) asparagine glycosylation. Threonine 488 is subject to Phosphothreonine.

Interacts with ANKRD26. Interacts with DYNLL1. Interacts with FAM83D/CHICA.

The protein resides in the cell surface. It is found in the cytoplasm. The protein localises to the cytoskeleton. Its subcellular location is the spindle. Functionally, receptor for hyaluronic acid (HA). Involved in cell motility. When hyaluronan binds to HMMR, the phosphorylation of a number of proteins, including the PTK2/FAK1 occurs. May also be involved in cellular transformation and metastasis formation, and in regulating extracellular-regulated kinase (ERK) activity. May act as a regulator of adipogenisis. This is Hyaluronan-mediated motility receptor (Hmmr) from Rattus norvegicus (Rat).